The chain runs to 158 residues: Ribosome maturation factor RimP (158 aa).

Belongs to the RimP family.

Its subcellular location is the cytoplasm. In terms of biological role, required for maturation of 30S ribosomal subunits. This chain is Ribosome maturation factor RimP, found in Pseudomonas putida (strain ATCC 47054 / DSM 6125 / CFBP 8728 / NCIMB 11950 / KT2440).